The sequence spans 161 residues: Ribosome maturation factor RimP (161 aa).

It belongs to the RimP family.

It is found in the cytoplasm. In terms of biological role, required for maturation of 30S ribosomal subunits. This Rickettsia typhi (strain ATCC VR-144 / Wilmington) protein is Ribosome maturation factor RimP.